The following is a 454-amino-acid chain: Asparagine--tRNA ligase (454 aa).

Belongs to the class-II aminoacyl-tRNA synthetase family. In terms of assembly, homodimer.

The protein resides in the cytoplasm. It carries out the reaction tRNA(Asn) + L-asparagine + ATP = L-asparaginyl-tRNA(Asn) + AMP + diphosphate + H(+). The chain is Asparagine--tRNA ligase from Ureaplasma parvum serovar 3 (strain ATCC 27815 / 27 / NCTC 11736).